The sequence spans 322 residues: Homoserine kinase (322 aa).

An ATP-binding site is contributed by 107-117 (PLSSGMGGSAA).

It belongs to the GHMP kinase family. Homoserine kinase subfamily.

It localises to the cytoplasm. It catalyses the reaction L-homoserine + ATP = O-phospho-L-homoserine + ADP + H(+). It participates in amino-acid biosynthesis; L-threonine biosynthesis; L-threonine from L-aspartate: step 4/5. Functionally, catalyzes the ATP-dependent phosphorylation of L-homoserine to L-homoserine phosphate. The chain is Homoserine kinase from Xylella fastidiosa (strain M23).